A 406-amino-acid chain; its full sequence is Pyruvate dehydrogenase E1 component subunit beta-2, chloroplastic (406 aa).

The transit peptide at 1–44 (MSSIIHGAGAATTTLSTFNSVDSKKLFVAPSRTNLSVRSQRYIV) directs the protein to the chloroplast. Position 142 (Glu-142) interacts with thiamine diphosphate. The K(+) site is built by Val-195, Ala-243, Ile-244, and Asn-248.

As to quaternary structure, tetramer of 2 alpha and 2 beta subunits. Requires thiamine diphosphate as cofactor.

Its subcellular location is the plastid. The protein resides in the chloroplast. It carries out the reaction N(6)-[(R)-lipoyl]-L-lysyl-[protein] + pyruvate + H(+) = N(6)-[(R)-S(8)-acetyldihydrolipoyl]-L-lysyl-[protein] + CO2. Functionally, the pyruvate dehydrogenase complex catalyzes the overall conversion of pyruvate to acetyl-CoA and CO(2). It contains multiple copies of three enzymatic components: pyruvate dehydrogenase (E1), dihydrolipoamide acetyltransferase (E2) and lipoamide dehydrogenase (E3). This chain is Pyruvate dehydrogenase E1 component subunit beta-2, chloroplastic (PDH-E1 BETA), found in Arabidopsis thaliana (Mouse-ear cress).